A 298-amino-acid chain; its full sequence is GTP cyclohydrolase FolE2 (298 aa).

This sequence belongs to the GTP cyclohydrolase IV family.

It carries out the reaction GTP + H2O = 7,8-dihydroneopterin 3'-triphosphate + formate + H(+). It functions in the pathway cofactor biosynthesis; 7,8-dihydroneopterin triphosphate biosynthesis; 7,8-dihydroneopterin triphosphate from GTP: step 1/1. Its function is as follows. Converts GTP to 7,8-dihydroneopterin triphosphate. The protein is GTP cyclohydrolase FolE2 of Pseudomonas paraeruginosa (strain DSM 24068 / PA7) (Pseudomonas aeruginosa (strain PA7)).